We begin with the raw amino-acid sequence, 541 residues long: Membrane protein insertase YidC (541 aa).

Transmembrane regions (helical) follow at residues 7–27 (LLVI…QLDY), 346–368 (IVQN…LYPL), 416–436 (LGGC…YWTF), 454–474 (LSAQ…MFLL), and 495–515 (PLIF…YWLV).

This sequence belongs to the OXA1/ALB3/YidC family. Type 1 subfamily. Interacts with the Sec translocase complex via SecD. Specifically interacts with transmembrane segments of nascent integral membrane proteins during membrane integration.

The protein localises to the cell inner membrane. Required for the insertion and/or proper folding and/or complex formation of integral membrane proteins into the membrane. Involved in integration of membrane proteins that insert both dependently and independently of the Sec translocase complex, as well as at least some lipoproteins. Aids folding of multispanning membrane proteins. This chain is Membrane protein insertase YidC, found in Pasteurella multocida (strain Pm70).